Here is a 495-residue protein sequence, read N- to C-terminus: D-hydantoinase/dihydropyrimidinase (495 aa).

Zn(2+) contacts are provided by His59, His61, and Lys150. Lys150 carries the post-translational modification N6-carboxylysine. Tyr155 is a substrate binding site. The Zn(2+) site is built by His183 and His239. Ser289 provides a ligand contact to substrate. Asp316 contacts Zn(2+). Asn337 contacts substrate.

Belongs to the metallo-dependent hydrolases superfamily. Hydantoinase/dihydropyrimidinase family. In terms of assembly, homotetramer. It depends on Zn(2+) as a cofactor. Post-translationally, carboxylation allows a single lysine to coordinate two zinc ions.

It carries out the reaction 5,6-dihydrouracil + H2O = 3-(carbamoylamino)propanoate + H(+). Functionally, catalyzes the hydrolysis of dihydropyrimidines and of the structurally related DL-5-mono-substituted hydantoins, to produce N-carbamoyl-D-amino acids. In Pseudomonas putida (Arthrobacter siderocapsulatus), this protein is D-hydantoinase/dihydropyrimidinase.